The following is a 185-amino-acid chain: MINEIKTDAQTRMDKCVESTKTQMAKVRTGRAHPSLLDTIQVPYYGSLTPLKQVASVSIGDARTLNVSVFDRTMIAAVEKAIMSSDLGLNPMSAGATIRIPLPALTEERRKDLIKVVRAEAENGRIAVRNVRRDANSDVKALEKEKECTEDDVRRTEDEVQKFTDAHIKKIDEILAAKEKELMEF.

The protein belongs to the RRF family.

The protein resides in the cytoplasm. Responsible for the release of ribosomes from messenger RNA at the termination of protein biosynthesis. May increase the efficiency of translation by recycling ribosomes from one round of translation to another. The sequence is that of Ribosome-recycling factor from Shewanella piezotolerans (strain WP3 / JCM 13877).